The chain runs to 197 residues: Ribonuclease HII (197 aa).

Residues 11–197 enclose the RNase H type-2 domain; it reads NLIAGVDEVG…FAPVRKILGL (187 aa). The a divalent metal cation site is built by Asp17, Glu18, and Asp109.

Belongs to the RNase HII family. Mn(2+) serves as cofactor. The cofactor is Mg(2+).

The protein resides in the cytoplasm. The enzyme catalyses Endonucleolytic cleavage to 5'-phosphomonoester.. In terms of biological role, endonuclease that specifically degrades the RNA of RNA-DNA hybrids. The chain is Ribonuclease HII from Haemophilus ducreyi (strain 35000HP / ATCC 700724).